Here is a 466-residue protein sequence, read N- to C-terminus: UDP-N-acetylmuramoylalanine--D-glutamate ligase (466 aa).

121-127 is an ATP binding site; it reads GTNGKST.

Belongs to the MurCDEF family.

The protein localises to the cytoplasm. It catalyses the reaction UDP-N-acetyl-alpha-D-muramoyl-L-alanine + D-glutamate + ATP = UDP-N-acetyl-alpha-D-muramoyl-L-alanyl-D-glutamate + ADP + phosphate + H(+). It participates in cell wall biogenesis; peptidoglycan biosynthesis. Its function is as follows. Cell wall formation. Catalyzes the addition of glutamate to the nucleotide precursor UDP-N-acetylmuramoyl-L-alanine (UMA). The sequence is that of UDP-N-acetylmuramoylalanine--D-glutamate ligase from Mesorhizobium japonicum (strain LMG 29417 / CECT 9101 / MAFF 303099) (Mesorhizobium loti (strain MAFF 303099)).